The sequence spans 657 residues: DNA-directed RNA polymerase III subunit RPC3 (657 aa).

The segment at 390–450 is disordered; sequence HSNQSLKRKQ…LDLDEDDSDP (61 aa). Over residues 428 to 448 the composition is skewed to acidic residues; it reads EESEEENEEGDANLDLDEDDS. The interval 584–605 is leucine-zipper; that stretch reads LTWNLARLISKLETLKEENATL.

The protein belongs to the RNA polymerase beta chain family. As to quaternary structure, component of the RNA polymerase III (Pol III) complex consisting of 17 subunits.

It is found in the nucleus. Its function is as follows. DNA-dependent RNA polymerase catalyzes the transcription of DNA into RNA using the four ribonucleoside triphosphates as substrates. Specific core component of RNA polymerase III which synthesizes small RNAs, such as 5S rRNA and tRNAs. The polypeptide is DNA-directed RNA polymerase III subunit RPC3 (RPC82) (Kluyveromyces lactis (strain ATCC 8585 / CBS 2359 / DSM 70799 / NBRC 1267 / NRRL Y-1140 / WM37) (Yeast)).